The chain runs to 940 residues: UvrABC system protein A (940 aa).

31–38 (GLSGSGKS) is a binding site for ATP. The C4-type zinc-finger motif lies at 253-280 (CPICGYSMRELEPRLFSFNNPAGACPTC). ABC transporter domains lie at 310-587 (WDRR…PESL) and 607-937 (ANPE…RFLK). 640–647 (GVSGSGKS) contacts ATP. Residues 740–766 (CEACQGDGVIKVEMHFLPDIYVPCDQC) form a C4-type zinc finger.

It belongs to the ABC transporter superfamily. UvrA family. In terms of assembly, forms a heterotetramer with UvrB during the search for lesions. Interacts with TRCF (Mfd). UvrB and TRCF binding to UvrA could be mutually exclusive.

It localises to the cytoplasm. The UvrABC repair system catalyzes the recognition and processing of DNA lesions. UvrA is an ATPase and a DNA-binding protein. A damage recognition complex composed of 2 UvrA and 2 UvrB subunits scans DNA for abnormalities. When the presence of a lesion has been verified by UvrB, the UvrA molecules dissociate. This chain is UvrABC system protein A, found in Escherichia coli (strain K12).